The sequence spans 856 residues: Alginate lyase 7 (856 aa).

PbH1 repeat units follow at residues 133–155, 157–179, 180–202, 204–226, 234–256, 257–279, 280–304, and 320–342; these read DYNV…DPHE, TINL…VADF, QIGA…NIVT, SHDI…VVQR, VYNV…LIKM, STDV…RVQG, VEDV…EVIV, and TQNV…GIQE. 9 Hemolysin-type calcium-binding repeats span residues 387–402, 404–421, 422–439, 538–549, 554–563, 565–581, 582–599, 715–731, and 733–749; these read GSTG…IADL, VGGS…NDVL, EGGA…ADIF, GTEGDDSLTGNA, LDGGSGNDSL, GGLG…DDIL, NGGL…ADIF, GGAG…DDIL, and GGSE…ADVF.

It belongs to the D-mannuronate C5-epimerase family. Ca(2+) is required as a cofactor.

The protein localises to the secreted. The catalysed reaction is Eliminative cleavage of alginate to give oligosaccharides with 4-deoxy-alpha-L-erythro-hex-4-enuronosyl groups at their non-reducing ends and beta-D-mannuronate at their reducing end.. The enzyme catalyses [(1-&gt;4)-beta-D-mannuronosyl](n) = [alginate](n). It functions in the pathway glycan biosynthesis; alginate biosynthesis. Its activity is regulated as follows. Inhibited by zinc. Functionally, converts beta-D-mannuronic acid (M) to alpha-L-guluronic acid (G). Has both epimerase and lyase activities. Contributes to abortive encystment by degrading the coat from inside the cyst. Important for cyst germination. This is Alginate lyase 7 from Azotobacter vinelandii.